The chain runs to 456 residues: Antigen Lp49 (456 aa).

Residues 1-34 (MNSNPKKKFLKLIKIKSDIILLIPIFLFLVCCKS) form the signal peptide. Cysteine 346 and cysteine 347 form a disulfide bridge.

It is found in the cell outer membrane. Its function is as follows. May be involved in virulence. Binds human plasminogen (PLG) and stimulates its proteolytic cleavage to enzymatically active plasmin in the presence of an urokinase-type PLG activator in vitro. Activated plasmin has proteolytic activity which may help the bacteria to spread throughout the host by degrading extracellular matrix components, facilitating tissue penetration and invasion. The protein is Antigen Lp49 of Leptospira interrogans serogroup Icterohaemorrhagiae serovar copenhageni (strain Fiocruz L1-130).